Here is a 274-residue protein sequence, read N- to C-terminus: uncharacterized protein (274 aa).

The protein resides in the plastid. The protein localises to the chloroplast. This is an uncharacterized protein from Euglena gracilis.